Here is a 404-residue protein sequence, read N- to C-terminus: Coenzyme F420H(2) oxidase (404 aa).

Fe cation-binding residues include His-83, Glu-85, Asp-87, His-88, His-151, Asp-170, and His-233. A Flavodoxin-like domain is found at 259-399; that stretch reads VTVIYDTMHG…ACFEAGRKLA (141 aa). Residues 265–270, 317–320, and 351–356 contribute to the FMN site; these read TMHGST, TIYD, and SMGGNG.

In the N-terminal section; belongs to the zinc metallo-hydrolase group 3 family. As to quaternary structure, homodimer. Homotetramer. The tetramer is composed of two functional dimers. It depends on FMN as a cofactor. Fe cation serves as cofactor.

It carries out the reaction 2 reduced coenzyme F420-(gamma-L-Glu)(n) + O2 = 2 oxidized coenzyme F420-(gamma-L-Glu)(n) + 2 H2O + 2 H(+). Functionally, catalyzes the oxidation of F420H(2) with O(2). May be involved in O(2) detoxification, reducing the intracellular O(2) concentration to a level allowing growth at the expense of methane formation. The protein is Coenzyme F420H(2) oxidase of Methanothermobacter marburgensis (strain ATCC BAA-927 / DSM 2133 / JCM 14651 / NBRC 100331 / OCM 82 / Marburg) (Methanobacterium thermoautotrophicum).